Consider the following 397-residue polypeptide: Acetyl-CoA acetyltransferase, cytosolic (397 aa).

At methionine 1 the chain carries N-acetylmethionine. Residue cysteine 92 is the Acyl-thioester intermediate of the active site. The residue at position 200 (lysine 200) is an N6-acetyllysine. The CoA site is built by arginine 223 and serine 226. N6-acetyllysine is present on residues lysine 233 and lysine 235. A CoA-binding site is contributed by serine 252. The Proton donor/acceptor role is filled by cysteine 383.

The protein belongs to the thiolase-like superfamily. Thiolase family. Homotetramer.

It localises to the cytoplasm. It is found in the cytosol. It catalyses the reaction 2 acetyl-CoA = acetoacetyl-CoA + CoA. Its pathway is lipid metabolism; fatty acid metabolism. Functionally, involved in the biosynthetic pathway of cholesterol. This chain is Acetyl-CoA acetyltransferase, cytosolic (Acat2), found in Mus musculus (Mouse).